A 73-amino-acid polypeptide reads, in one-letter code: Putative defensin-like protein 277 (73 aa).

Residues 1–24 form the signal peptide; it reads MSAQKIYLASLLLFICLVFPQSTA. Intrachain disulfides connect cysteine 27–cysteine 64, cysteine 33–cysteine 52, cysteine 39–cysteine 62, and cysteine 43–cysteine 63.

The protein belongs to the DEFL family.

Its subcellular location is the secreted. This is Putative defensin-like protein 277 from Arabidopsis thaliana (Mouse-ear cress).